The chain runs to 122 residues: Toxin CSTX-1 (122 aa).

Positions 1–20 (MKVLIISAVLFITIFSNISA) are cleaved as a signal peptide. Residues 21 to 47 (EIEDDFLEDESFEAEDIIPFFENEQAR) constitute a propeptide that is removed on maturation. Cystine bridges form between C49–C64, C56–C73, C63–C91, and C75–C89. Positions 99-112 (AIETGLNIFRGLFK) are predicted alpha-helix. R108 carries the arginine amide; in CSTX-2a modification. A Lysine amide; in omega-ctenitoxin-Cs1a modification is found at K121.

Belongs to the neurotoxin 19 (CSTX) family. 04 (U1-Lctx) subfamily. As to quaternary structure, monomer. Interacts with CSTX-13 (AC P83919) (Kd=430 nM), but does not interact with CSTX-9 (AC P58604). As to expression, expressed by the venom gland.

It is found in the secreted. Its subcellular location is the target cell membrane. Functionally, spider venom toxin that shows calcium channel blocking activity and exhibits cytolytic activity by affecting the outer leaflet curvature and/or pore formation across the membrane. It blocks L-type calcium channels (Cav1/CACNA1) in mammalian neurons at nanomolar concentrations. Furthermore, it produces a slow voltage-independent block of mid/low and high voltage-activated calcium channels in cockroach neurons. Potassium ions, histamine, M-ctenitoxin-Cs1a (AC P83619), CSTX-9 (AC P58604), and CSTX-13 (AC P83919) synergistically increase the insecticidal activity of this toxin. In vivo, it causes paralysis in blow flies and provokes death in drosophila. Blocks voltage-activated calcium channels (Cav). Does not induce cell membrane permeability increase when tested on Xenopus oocytes. No alpha-helical structures are detectable. Is 7-fold less neurotoxic than omega-ctenitoxin-Cs1a on drosophila flies. In terms of biological role, blocks voltage-activated calcium channels (Cav). Is 190-fold less neurotoxic than omega-ctenitoxin-Cs1a on drosophila flies. This chain is Toxin CSTX-1, found in Cupiennius salei (American wandering spider).